The following is a 197-amino-acid chain: 22.7 kDa class IV heat shock protein (197 aa).

The first 28 residues, 1-28, serve as a signal peptide directing secretion; it reads MSLKPLNMLLVPFLLLILAADFPLKAKA. Positions 68-184 constitute a sHSP domain; the sequence is PSITLSHARV…GPRMVSIVEE (117 aa). The Prevents secretion from ER signature appears at 194–197; it reads DELK.

The protein belongs to the small heat shock protein (HSP20) family. In terms of assembly, forms oligomeric structures.

Its subcellular location is the endoplasmic reticulum lumen. The sequence is that of 22.7 kDa class IV heat shock protein (HSP22.7) from Pisum sativum (Garden pea).